A 329-amino-acid polypeptide reads, in one-letter code: Putative oligopeptide transport ATP-binding protein YkfD (329 aa).

The region spanning 7–252 is the ABC transporter domain; it reads LEVSQLKMHF…PLHPYTKALL (246 aa). 44–51 serves as a coordination point for ATP; that stretch reads GESGCGKS.

Belongs to the ABC transporter superfamily.

The sequence is that of Putative oligopeptide transport ATP-binding protein YkfD (ykfD) from Bacillus subtilis (strain 168).